Here is a 418-residue protein sequence, read N- to C-terminus: Exodeoxyribonuclease 7 large subunit (418 aa).

It belongs to the XseA family. Heterooligomer composed of large and small subunits.

Its subcellular location is the cytoplasm. The enzyme catalyses Exonucleolytic cleavage in either 5'- to 3'- or 3'- to 5'-direction to yield nucleoside 5'-phosphates.. Functionally, bidirectionally degrades single-stranded DNA into large acid-insoluble oligonucleotides, which are then degraded further into small acid-soluble oligonucleotides. This is Exodeoxyribonuclease 7 large subunit from Acaryochloris marina (strain MBIC 11017).